Consider the following 199-residue polypeptide: Probable GTP-binding protein EngB (199 aa).

The region spanning N22 to S196 is the EngB-type G domain. GTP contacts are provided by residues G30–S37, G57–S61, D75–G78, T142–D145, and F175–A177. Residues S37 and T59 each coordinate Mg(2+).

Belongs to the TRAFAC class TrmE-Era-EngA-EngB-Septin-like GTPase superfamily. EngB GTPase family. The cofactor is Mg(2+).

In terms of biological role, necessary for normal cell division and for the maintenance of normal septation. The chain is Probable GTP-binding protein EngB from Halothermothrix orenii (strain H 168 / OCM 544 / DSM 9562).